A 459-amino-acid polypeptide reads, in one-letter code: Protein phosphatase 1M (459 aa).

Residues 1 to 10 (MSAGWFRRRF) show a composition bias toward basic residues. The disordered stretch occupies residues 1 to 64 (MSAGWFRRRF…SRPVRSPARG (64 aa)). The span at 14–27 (EPLPAPRPPGPHAS) shows a compositional bias: pro residues. The span at 38–48 (RGSSSSPGAAD) shows a compositional bias: low complexity. Mn(2+) is bound by residues Asp-125 and Gly-126. The PPM-type phosphatase domain maps to 162–459 (MHLNGRCICP…HSQGQESSDH (298 aa)).

It belongs to the PP2C family. The cofactor is Mg(2+). It depends on Mn(2+) as a cofactor.

The protein localises to the nucleus. It catalyses the reaction O-phospho-L-seryl-[protein] + H2O = L-seryl-[protein] + phosphate. It carries out the reaction O-phospho-L-threonyl-[protein] + H2O = L-threonyl-[protein] + phosphate. This Homo sapiens (Human) protein is Protein phosphatase 1M (PPM1M).